Reading from the N-terminus, the 957-residue chain is Collagen alpha-1(I) chain (957 aa).

Residues 1 to 957 form a disordered region; sequence GPMGPSGPRG…PGPPGPPGPP (957 aa). The span at 23-33 shows a compositional bias: low complexity; the sequence is FPGEPGASGPM. Residues 45–59 show a composition bias toward basic and acidic residues; sequence NGDDGEAGKPGRPGE. Position 87 is a phosphoserine (Ser-87). 2 stretches are compositionally biased toward low complexity: residues 95 to 113 and 125 to 138; these read DAGP…PRGI and PAGA…TGAA. Positions 140-152 are enriched in pro residues; the sequence is PPGPTGPAGPPGF. Low complexity-rich tracts occupy residues 186 to 210 and 219 to 228; these read AGAA…RGPS and SGPKGNSGEP. The span at 277–286 shows a compositional bias: gly residues; it reads GERGGPGSRG. 8 stretches are compositionally biased toward low complexity: residues 330 to 356, 365 to 384, 426 to 453, 488 to 516, 576 to 590, 603 to 618, 649 to 665, and 707 to 731; these read KGIT…QDGR, ARGQ…AGEP, QGPA…PGEQ, PRGA…QGAP, AGPS…ARGA, AGFA…PGAK, SAGP…AGRV, and AGEK…QGIA. The residue at position 579 (Ser-579) is a Phosphoserine. Composition is skewed to pro residues over residues 772-782 and 818-833; these read PPGPMGPPGIA and AGPP…PGPV. A compositionally biased stretch (low complexity) spans 854-868; the sequence is IGPVGARGAAGPQGP. Over residues 869-883 the composition is skewed to basic and acidic residues; sequence RGDKGETGEQGDRGI. A compositionally biased stretch (low complexity) spans 902–935; the sequence is PGEQGPSGASGPAGPRGPPGSAGSPGKDGINGIP. The span at 937–957 shows a compositional bias: pro residues; sequence PIGPPGPRPGPPGPPGPPGPP.

This sequence belongs to the fibrillar collagen family. In terms of assembly, trimers of one alpha 2(I) and two alpha 1(I) chains. Prolines at the third position of the tripeptide repeating unit (G-X-Y) are hydroxylated in some or all of the chains. As to expression, forms the fibrils of tendon, ligaments and bones. In bones, the fibrils are mineralized with calcium hydroxyapatite.

It localises to the secreted. The protein resides in the extracellular space. Its subcellular location is the extracellular matrix. Its function is as follows. Type I collagen is a member of group I collagen (fibrillar forming collagen). The sequence is that of Collagen alpha-1(I) chain from Hippopotamus amphibius (Hippopotamus).